The following is a 345-amino-acid chain: Methionine import ATP-binding protein MetN (345 aa).

Residues 2 to 241 (IKLNNITKIF…PKTELAQEFI (240 aa)) enclose the ABC transporter domain. 38–45 (GASGAGKS) is an ATP binding site.

This sequence belongs to the ABC transporter superfamily. Methionine importer (TC 3.A.1.24) family. The complex is composed of two ATP-binding proteins (MetN), two transmembrane proteins (MetI) and a solute-binding protein (MetQ).

The protein localises to the cell inner membrane. The enzyme catalyses L-methionine(out) + ATP + H2O = L-methionine(in) + ADP + phosphate + H(+). The catalysed reaction is D-methionine(out) + ATP + H2O = D-methionine(in) + ADP + phosphate + H(+). In terms of biological role, part of the ABC transporter complex MetNIQ involved in methionine import. Responsible for energy coupling to the transport system. The polypeptide is Methionine import ATP-binding protein MetN (Haemophilus influenzae (strain 86-028NP)).